The chain runs to 67 residues: Alpha-conotoxin-like Qc1.1a (67 aa).

An N-terminal signal peptide occupies residues 1–21 (MGMRMMFTMFLLVVLAITVVS). Residues 22–46 (FTSDHASDGRNTAANDKASNLMALR) constitute a propeptide that is removed on maturation. 2 disulfide bridges follow: cysteine 49–cysteine 55 and cysteine 50–cysteine 63. Residues 51 to 53 (PDP) are lacks the Ser-Xaa-Pro motif that is crucial for potent interaction with nAChR.

It belongs to the conotoxin A superfamily. Expressed by the venom duct.

It is found in the secreted. In terms of biological role, alpha-conotoxins act on postsynaptic membranes, they bind to the nicotinic acetylcholine receptors (nAChR) and thus inhibit them. Has possibly a distinct nAChR binding mode from other alpha-conotoxins, due to a different three residue motif (lacks the Ser-Xaa-Pro motif). The protein is Alpha-conotoxin-like Qc1.1a of Conus quercinus (Oak cone).